Reading from the N-terminus, the 559-residue chain is Laccase-7 (559 aa).

An N-terminal signal peptide occupies residues 1–28; that stretch reads MVIPWCSSMMRLLWFLFALLLARSVADA. Residues Asn32, Asn47, and Asn82 are each glycosylated (N-linked (GlcNAc...) asparagine). Plastocyanin-like domains follow at residues 36 to 152 and 163 to 316; these read TVES…PRNG and EVPI…YNTT. Positions 86 and 88 each coordinate Cu cation. Residues Asn112 and Asn120 are each glycosylated (N-linked (GlcNAc...) asparagine). Residues His131 and His133 each contribute to the Cu cation site. N-linked (GlcNAc...) asparagine glycosylation is found at Asn151, Asn210, Asn220, Asn257, Asn278, Asn314, Asn363, and Asn443. Residues 396–543 form the Plastocyanin-like 3 domain; the sequence is FRLPSQMSLL…GMVFAVDNGT (148 aa). Cu cation-binding residues include His461, His464, and His466. N-linked (GlcNAc...) asparagine glycosylation occurs at Asn484. 4 residues coordinate Cu cation: His522, Cys523, His524, and His528. An N-linked (GlcNAc...) asparagine glycan is attached at Asn541.

Belongs to the multicopper oxidase family. Requires Cu cation as cofactor.

It localises to the secreted. The protein resides in the extracellular space. Its subcellular location is the apoplast. The enzyme catalyses 4 hydroquinone + O2 = 4 benzosemiquinone + 2 H2O. Its function is as follows. Lignin degradation and detoxification of lignin-derived products. The polypeptide is Laccase-7 (LAC7) (Oryza sativa subsp. japonica (Rice)).